The following is a 161-amino-acid chain: Disulfide bond formation protein B (161 aa).

Topologically, residues 1–8 are cytoplasmic; the sequence is MQANSRAY. The chain crosses the membrane as a helical span at residues 9–25; sequence FLLIALVSFGLVGVALY. Residues 26 to 43 are Periplasmic-facing; sequence LQFEKGYQPCPLCVMQRF. C35 and C38 form a disulfide bridge. Residues 44-58 form a helical membrane-spanning segment; that stretch reads AFIGIGIFSLLAAVA. Residues 59-63 lie on the Cytoplasmic side of the membrane; the sequence is QNTRS. The helical transmembrane segment at 64–81 threads the bilayer; sequence LWQGLGMLSGIAGIAVAV. Residues 82–136 lie on the Periplasmic side of the membrane; sequence YHVSLLLNPKASCGIDPLENWVNALPTAKALPQVFYADGLCTAPLPPVLGLSVPA. The cysteines at positions 94 and 122 are disulfide-linked. The helical transmembrane segment at 137–155 threads the bilayer; that stretch reads WSLIWLFILTLTLAVGLIR. Topologically, residues 156-161 are cytoplasmic; that stretch reads REKNFR.

This sequence belongs to the DsbB family.

It localises to the cell inner membrane. Its function is as follows. Required for disulfide bond formation in some periplasmic proteins. Acts by oxidizing the DsbA protein. The polypeptide is Disulfide bond formation protein B (Cupriavidus necator (strain ATCC 17699 / DSM 428 / KCTC 22496 / NCIMB 10442 / H16 / Stanier 337) (Ralstonia eutropha)).